A 374-amino-acid polypeptide reads, in one-letter code: Gustatory receptor 23a (374 aa).

Topologically, residues 1-6 (MFPPTR) are cytoplasmic. A helical transmembrane segment spans residues 7–27 (VQASSRVVLKIFHFILVAFSL). The Extracellular portion of the chain corresponds to 28-36 (RSRRLSRLV). The helical transmembrane segment at 37–57 (LWLQFLGWLTWFISMWTQSVI) threads the bilayer. At 58 to 72 (YAQTIDCTLDCSLRH) the chain is on the cytoplasmic side. The chain crosses the membrane as a helical span at residues 73-93 (ILTFFQTVSHAFIVVTSFLDG). Over 94 to 112 (FRIKQDQLDEPIAFEDSDP) the chain is Extracellular. Residues 113–133 (WLAFTVLAMLVPTLGVEYLVC) traverse the membrane as a helical segment. Residues 134–226 (SNAPEYAFRI…YNDLHYLFVR (93 aa)) are Cytoplasmic-facing. The chain crosses the membrane as a helical span at residues 227–247 (INGYFGGSLLTIIIVHFAIFV). The Extracellular segment spans residues 248–263 (SNSYWLFVDIRTRPWR). A helical membrane pass occupies residues 264–284 (IYAILLNLGFIFNVALQMAAA). Topologically, residues 285–343 (CWHCQQSYNLGRQIGCLISKLVKPQGSKLYNDLVSEFSLQTLHQRFVVTAKDFFSLNLH) are cytoplasmic. The chain crosses the membrane as a helical span at residues 344 to 364 (LLSSMFAAVVTYLVILIQFMF). Topologically, residues 365–374 (AERSSTRGSG) are extracellular.

This sequence belongs to the insect chemoreceptor superfamily. Gustatory receptor (GR) family. Gr2a subfamily. Expressed in the adult labellar chemosensory neurons and labral sense organ. Expressed in neurons of the dorsal pharyngeal sense organ of larvae.

It localises to the cell membrane. Its function is as follows. Probable gustatory receptor which mediates acceptance or avoidance behavior, depending on its substrates. The polypeptide is Gustatory receptor 23a (Gr23a) (Drosophila melanogaster (Fruit fly)).